The following is a 411-amino-acid chain: Argininosuccinate synthase (411 aa).

ATP contacts are provided by residues 10–18 and alanine 37; that span reads AYSGGLDTS. 2 residues coordinate L-citrulline: tyrosine 89 and serine 94. An ATP-binding site is contributed by glycine 119. Residues threonine 121, asparagine 125, and aspartate 126 each contribute to the L-aspartate site. Residue asparagine 125 coordinates L-citrulline. Residues arginine 129, serine 178, serine 187, glutamate 263, and tyrosine 275 each contribute to the L-citrulline site.

It belongs to the argininosuccinate synthase family. Type 1 subfamily. Homotetramer.

Its subcellular location is the cytoplasm. The catalysed reaction is L-citrulline + L-aspartate + ATP = 2-(N(omega)-L-arginino)succinate + AMP + diphosphate + H(+). Its pathway is amino-acid biosynthesis; L-arginine biosynthesis; L-arginine from L-ornithine and carbamoyl phosphate: step 2/3. The chain is Argininosuccinate synthase from Aeromonas hydrophila subsp. hydrophila (strain ATCC 7966 / DSM 30187 / BCRC 13018 / CCUG 14551 / JCM 1027 / KCTC 2358 / NCIMB 9240 / NCTC 8049).